A 175-amino-acid chain; its full sequence is Coagulogen (175 aa).

8 cysteine pairs are disulfide-bonded: Cys-8-Cys-167, Cys-10-Cys-95, Cys-60-Cys-161, Cys-65-Cys-121, Cys-75-Cys-168, Cys-88-Cys-140, Cys-127-Cys-170, and Cys-134-Cys-172.

The protein belongs to the coagulin family. In terms of assembly, coagulogen is cleaved after Arg-18 and Arg-46 by a clotting enzyme contained in the hemocyte and activated by a bacterial endotoxin (lipopolysaccharide). This cleavage releases the peptide C and leaves 2 chains of coagulin, A and B, linked by two disulfide bonds. Coagulin molecules interlink to form a gel. Hemolymph.

It localises to the secreted. In terms of biological role, coagulogen is a gel-forming protein of hemolymph; it hinders the spread of invaders by immobilizing them. This is Coagulogen from Carcinoscorpius rotundicauda (Mangrove horseshoe crab).